Here is a 501-residue protein sequence, read N- to C-terminus: Cytochrome P450 76M5 (501 aa).

A helical transmembrane segment spans residues 5–25 (ELWVLAAALAVSLLYYLAALM). Cys443 contributes to the heme binding site.

It belongs to the cytochrome P450 family. The cofactor is heme.

The protein resides in the membrane. The catalysed reaction is ent-sandaracopimaradien-3beta-ol + reduced [NADPH--hemoprotein reductase] + O2 = oryzalexin E + oxidized [NADPH--hemoprotein reductase] + H2O + H(+). Enzyme of the diterpenoid metabolism involved in the biosynthesis of the oryzalexin class of phytoalexins. Hydroxylates ent-sandaracopimaradien. This chain is Cytochrome P450 76M5, found in Oryza sativa subsp. japonica (Rice).